The sequence spans 303 residues: D-alanine--D-alanine ligase (303 aa).

Positions Lys-103–Glu-293 constitute an ATP-grasp domain. Pro-130 to Thr-179 lines the ATP pocket. Mg(2+) is bound by residues Asp-247, Glu-260, and Asn-262.

It belongs to the D-alanine--D-alanine ligase family. It depends on Mg(2+) as a cofactor. The cofactor is Mn(2+).

The protein resides in the cytoplasm. It carries out the reaction 2 D-alanine + ATP = D-alanyl-D-alanine + ADP + phosphate + H(+). It participates in cell wall biogenesis; peptidoglycan biosynthesis. Cell wall formation. This is D-alanine--D-alanine ligase from Methylacidiphilum infernorum (isolate V4) (Methylokorus infernorum (strain V4)).